A 598-amino-acid chain; its full sequence is Glutamine--fructose-6-phosphate aminotransferase [isomerizing] (598 aa).

The active-site Nucleophile; for GATase activity is Cys2. Residues 2-219 form the Glutamine amidotransferase type-2 domain; the sequence is CGIIGYIGPR…DGEYGIVSKD (218 aa). SIS domains follow at residues 280 to 420 and 449 to 588; these read VAEL…LVGI and IAVK…PDRP. The For Fru-6P isomerization activity role is filled by Lys593.

As to quaternary structure, homodimer.

Its subcellular location is the cytoplasm. The enzyme catalyses D-fructose 6-phosphate + L-glutamine = D-glucosamine 6-phosphate + L-glutamate. Its function is as follows. Catalyzes the first step in hexosamine metabolism, converting fructose-6P into glucosamine-6P using glutamine as a nitrogen source. This is Glutamine--fructose-6-phosphate aminotransferase [isomerizing] from Pyrococcus horikoshii (strain ATCC 700860 / DSM 12428 / JCM 9974 / NBRC 100139 / OT-3).